The primary structure comprises 635 residues: Threonine--tRNA ligase (635 aa).

In terms of domain architecture, TGS spans 1 to 61 (MIKITLKDGK…HKDSSLEILT (61 aa)). The catalytic stretch occupies residues 242–532 (DHRKLGKELD…LIEQYAGAFP (291 aa)). Residues Cys-333, His-384, and His-509 each contribute to the Zn(2+) site.

This sequence belongs to the class-II aminoacyl-tRNA synthetase family. As to quaternary structure, homodimer. Requires Zn(2+) as cofactor.

The protein localises to the cytoplasm. The enzyme catalyses tRNA(Thr) + L-threonine + ATP = L-threonyl-tRNA(Thr) + AMP + diphosphate + H(+). Its function is as follows. Catalyzes the attachment of threonine to tRNA(Thr) in a two-step reaction: L-threonine is first activated by ATP to form Thr-AMP and then transferred to the acceptor end of tRNA(Thr). Also edits incorrectly charged L-seryl-tRNA(Thr). The chain is Threonine--tRNA ligase from Clostridium botulinum (strain ATCC 19397 / Type A).